The primary structure comprises 426 residues: Tyrosine--tRNA ligase (426 aa).

An L-tyrosine-binding site is contributed by Y36. The 'HIGH' region motif lies at 41–50 (PTAPSLHVGH). The L-tyrosine site is built by Y174 and Q178. The 'KMSKS' region motif lies at 234–238 (KLGKS). K237 lines the ATP pocket. The region spanning 359–416 (DGIVDLLVASGLSPSRGAARRTIDEGGVLVNNIRIQSEEWTPRTSDFLHGRWLVLRRG) is the S4 RNA-binding domain.

It belongs to the class-I aminoacyl-tRNA synthetase family. TyrS type 1 subfamily. In terms of assembly, homodimer.

The protein resides in the cytoplasm. The enzyme catalyses tRNA(Tyr) + L-tyrosine + ATP = L-tyrosyl-tRNA(Tyr) + AMP + diphosphate + H(+). In terms of biological role, catalyzes the attachment of tyrosine to tRNA(Tyr) in a two-step reaction: tyrosine is first activated by ATP to form Tyr-AMP and then transferred to the acceptor end of tRNA(Tyr). The polypeptide is Tyrosine--tRNA ligase (Mycobacterium leprae (strain TN)).